The following is an 815-amino-acid chain: Plakophilin-2 (815 aa).

Residues 1–12 (MLKPHPEHKEQP) show a composition bias toward basic and acidic residues. Disordered stretches follow at residues 1-31 (MLKPHPEHKEQPQDSFTPSGDSTPDASMAEE) and 76-105 (QLTLSRKKRKPKPADSSLAESQSSCQISSS). Positions 13 to 25 (QDSFTPSGDSTPD) are enriched in polar residues. Residues 91–105 (SSLAESQSSCQISSS) show a composition bias toward low complexity. 9 ARM repeats span residues 317–357 (KGKP…NQCF), 360–399 (PDAKRKILHLQGIPKLLKLMQNDSEELQWAAVSSLRNIVF), 402–442 (NENK…NLSS), 457–498 (PLTD…NLSS), 501–547 (PDGR…NLSY), 604–644 (PHGV…NLTA), 652–691 (AIAHFIVQKEGGLSQVKKLLQEAEKEELRISVSLLKNISR), 693–737 (RELH…NLSQ), and 740–783 (ASNT…TLWR).

It belongs to the beta-catenin family.

The protein localises to the nucleus. It is found in the cell junction. It localises to the desmosome. Its subcellular location is the cytoplasm. Its function is as follows. Required for development of the heart, potentially via cell-cell adhesion and modulation of expression of cardiac precursor genes. Plays a role in desmosome cell-cell junctions and their intracellular connectivity. This is Plakophilin-2 from Danio rerio (Zebrafish).